The following is a 304-amino-acid chain: Probable WRKY transcription factor 13 (304 aa).

The disordered stretch occupies residues 141-190 (QKNNHGSEIDVDDNDDEVGDGGGINDDDNGRHHHHDTPSRHDKHNTASLG). Acidic residues predominate over residues 149–159 (IDVDDNDDEVG). A DNA-binding region (WRKY) is located at residues 217–282 (SEVDVLDDGY…YEGRHLHSPS (66 aa)).

The protein belongs to the WRKY group II-c family.

The protein resides in the nucleus. Its function is as follows. Transcription factor. Interacts specifically with the W box (5'-(T)TGAC[CT]-3'), a frequently occurring elicitor-responsive cis-acting element. The chain is Probable WRKY transcription factor 13 (WRKY13) from Arabidopsis thaliana (Mouse-ear cress).